Consider the following 419-residue polypeptide: L-rhamnose isomerase (419 aa).

Residues His262, Asp294, and Asp296 each coordinate Mn(2+).

It belongs to the rhamnose isomerase family. As to quaternary structure, homotetramer. Mn(2+) is required as a cofactor.

It is found in the cytoplasm. It catalyses the reaction L-rhamnopyranose = L-rhamnulose. It participates in carbohydrate degradation; L-rhamnose degradation; glycerone phosphate from L-rhamnose: step 1/3. In terms of biological role, catalyzes the interconversion of L-rhamnose and L-rhamnulose. In Salmonella gallinarum (strain 287/91 / NCTC 13346), this protein is L-rhamnose isomerase.